A 546-amino-acid polypeptide reads, in one-letter code: Probable protein kinase UbiB (546 aa).

Residues 124–502 (DFDIKPLASA…RVRQGQSRYL (379 aa)) form the Protein kinase domain. ATP contacts are provided by residues 130 to 138 (LASASIAQV) and Lys153. Asp288 acts as the Proton acceptor in catalysis. The next 2 membrane-spanning stretches (helical) occupy residues 501-521 (YLFGIGATLLLSGTLLLINRP) and 522-542 (DWQMMPAWLMAGGLVVWLIGW).

Belongs to the ABC1 family. UbiB subfamily.

The protein resides in the cell inner membrane. It participates in cofactor biosynthesis; ubiquinone biosynthesis [regulation]. Functionally, is probably a protein kinase regulator of UbiI activity which is involved in aerobic coenzyme Q (ubiquinone) biosynthesis. The polypeptide is Probable protein kinase UbiB (Enterobacter sp. (strain 638)).